A 63-amino-acid chain; its full sequence is Large ribosomal subunit protein uL30 (63 aa).

This sequence belongs to the universal ribosomal protein uL30 family. Part of the 50S ribosomal subunit.

The protein is Large ribosomal subunit protein uL30 of Coxiella burnetii (strain CbuK_Q154) (Coxiella burnetii (strain Q154)).